We begin with the raw amino-acid sequence, 178 residues long: Large ribosomal subunit protein uL6 (178 aa).

The protein belongs to the universal ribosomal protein uL6 family. As to quaternary structure, part of the 50S ribosomal subunit.

Its function is as follows. This protein binds to the 23S rRNA, and is important in its secondary structure. It is located near the subunit interface in the base of the L7/L12 stalk, and near the tRNA binding site of the peptidyltransferase center. This is Large ribosomal subunit protein uL6 from Limosilactobacillus fermentum (strain NBRC 3956 / LMG 18251) (Lactobacillus fermentum).